Reading from the N-terminus, the 239-residue chain is tRNA (guanine-N(7)-)-methyltransferase (239 aa).

Residues E69, E94, D121, and D144 each coordinate S-adenosyl-L-methionine. Residue D144 is part of the active site. K148 lines the substrate pocket. Positions 150 to 155 are interaction with RNA; sequence RHNKRR. Substrate contacts are provided by residues D180 and 217 to 220; that span reads TKFE.

This sequence belongs to the class I-like SAM-binding methyltransferase superfamily. TrmB family. In terms of assembly, monomer.

The enzyme catalyses guanosine(46) in tRNA + S-adenosyl-L-methionine = N(7)-methylguanosine(46) in tRNA + S-adenosyl-L-homocysteine. It participates in tRNA modification; N(7)-methylguanine-tRNA biosynthesis. Functionally, catalyzes the formation of N(7)-methylguanine at position 46 (m7G46) in tRNA. In Sodalis glossinidius (strain morsitans), this protein is tRNA (guanine-N(7)-)-methyltransferase.